The following is a 374-amino-acid chain: WAT1-related protein At1g60050 (374 aa).

10 helical membrane-spanning segments follow: residues 11 to 31, 42 to 62, 82 to 102, 107 to 127, 145 to 165, 194 to 214, 228 to 248, 255 to 275, 292 to 312, and 315 to 335; these read IVPFIVMALMEACTIALTILA, FVFIVYTNALGSLLLLPYSFY, IFLLGFTGVFLFQNMAFLGLS, IVVCAMGLQSPAFSFLLSLAL, IGTLICFTGAFVEVIYLGPFI, WALGSLLLACATLSISIWNII, VVSAYSLAGTLQCAIFSAFME, ELKLNMDLYLIIATGIFGSII, VPLFKPFGILWASIFGTSFFV, and LHYGSVLGAAIAGTGYLLIMW. One can recognise an EamA domain in the interval 26–155; that stretch reads ALTILAKTAL…GTLICFTGAF (130 aa).

Belongs to the drug/metabolite transporter (DMT) superfamily. Plant drug/metabolite exporter (P-DME) (TC 2.A.7.4) family.

The protein resides in the membrane. In Arabidopsis thaliana (Mouse-ear cress), this protein is WAT1-related protein At1g60050.